The primary structure comprises 485 residues: Glutamyl-tRNA(Gln) amidotransferase subunit A (485 aa).

Active-site charge relay system residues include Lys78 and Ser153. Ser177 serves as the catalytic Acyl-ester intermediate.

Belongs to the amidase family. GatA subfamily. As to quaternary structure, heterotrimer of A, B and C subunits.

It carries out the reaction L-glutamyl-tRNA(Gln) + L-glutamine + ATP + H2O = L-glutaminyl-tRNA(Gln) + L-glutamate + ADP + phosphate + H(+). In terms of biological role, allows the formation of correctly charged Gln-tRNA(Gln) through the transamidation of misacylated Glu-tRNA(Gln) in organisms which lack glutaminyl-tRNA synthetase. The reaction takes place in the presence of glutamine and ATP through an activated gamma-phospho-Glu-tRNA(Gln). In Trichlorobacter lovleyi (strain ATCC BAA-1151 / DSM 17278 / SZ) (Geobacter lovleyi), this protein is Glutamyl-tRNA(Gln) amidotransferase subunit A.